A 179-amino-acid chain; its full sequence is Ribosome maturation factor RimM (179 aa).

The 79-residue stretch at 101–179 (EGEVYVHDLC…VELMHRWILE (79 aa)) folds into the PRC barrel domain.

The protein belongs to the RimM family. Binds ribosomal protein uS19.

Its subcellular location is the cytoplasm. Its function is as follows. An accessory protein needed during the final step in the assembly of 30S ribosomal subunit, possibly for assembly of the head region. Essential for efficient processing of 16S rRNA. May be needed both before and after RbfA during the maturation of 16S rRNA. It has affinity for free ribosomal 30S subunits but not for 70S ribosomes. This chain is Ribosome maturation factor RimM, found in Treponema denticola (strain ATCC 35405 / DSM 14222 / CIP 103919 / JCM 8153 / KCTC 15104).